The sequence spans 370 residues: Uroporphyrinogen decarboxylase (370 aa).

Substrate-binding positions include 29 to 33 (RQAGR), D79, Y155, S210, and H342.

The protein belongs to the uroporphyrinogen decarboxylase family. As to quaternary structure, homodimer.

It localises to the cytoplasm. The catalysed reaction is uroporphyrinogen III + 4 H(+) = coproporphyrinogen III + 4 CO2. Its pathway is porphyrin-containing compound metabolism; protoporphyrin-IX biosynthesis; coproporphyrinogen-III from 5-aminolevulinate: step 4/4. Its function is as follows. Catalyzes the decarboxylation of four acetate groups of uroporphyrinogen-III to yield coproporphyrinogen-III. In Acidovorax sp. (strain JS42), this protein is Uroporphyrinogen decarboxylase.